A 210-amino-acid chain; its full sequence is FMN-dependent NADH:quinone oxidoreductase (210 aa).

Residues Ser9 and 15-17 contribute to the FMN site; that span reads SHS.

The protein belongs to the azoreductase type 1 family. As to quaternary structure, homodimer. It depends on FMN as a cofactor.

It carries out the reaction 2 a quinone + NADH + H(+) = 2 a 1,4-benzosemiquinone + NAD(+). The enzyme catalyses N,N-dimethyl-1,4-phenylenediamine + anthranilate + 2 NAD(+) = 2-(4-dimethylaminophenyl)diazenylbenzoate + 2 NADH + 2 H(+). In terms of biological role, quinone reductase that provides resistance to thiol-specific stress caused by electrophilic quinones. Functionally, also exhibits azoreductase activity. Catalyzes the reductive cleavage of the azo bond in aromatic azo compounds to the corresponding amines. This is FMN-dependent NADH:quinone oxidoreductase from Mesorhizobium japonicum (strain LMG 29417 / CECT 9101 / MAFF 303099) (Mesorhizobium loti (strain MAFF 303099)).